The following is a 395-amino-acid chain: Elongation factor Tu (395 aa).

The tr-type G domain maps to 10–205 (KVHMNVGTIG…AMDSYFEDPV (196 aa)). The tract at residues 19–26 (GHVDHGKT) is G1. 19 to 26 (GHVDHGKT) serves as a coordination point for GTP. T26 lines the Mg(2+) pocket. Positions 60-64 (GITIN) are G2. Residues 81–84 (DCPG) form a G3 region. GTP-binding positions include 81–85 (DCPGH) and 136–139 (NKVD). The interval 136-139 (NKVD) is G4. Residues 173 to 175 (SAF) are G5.

It belongs to the TRAFAC class translation factor GTPase superfamily. Classic translation factor GTPase family. EF-Tu/EF-1A subfamily. In terms of assembly, monomer.

It is found in the cytoplasm. The catalysed reaction is GTP + H2O = GDP + phosphate + H(+). Its function is as follows. GTP hydrolase that promotes the GTP-dependent binding of aminoacyl-tRNA to the A-site of ribosomes during protein biosynthesis. This Treponema pallidum (strain Nichols) protein is Elongation factor Tu.